Reading from the N-terminus, the 345-residue chain is Putative membrane protein ORF59 (345 aa).

The next 4 membrane-spanning stretches (helical) occupy residues 46-63, 101-118, 147-165, and 265-286; these read LVFA…MMLI, IVFV…LVFL, IFGI…FSIL, and VVPV…WMVI.

It is found in the membrane. This chain is Putative membrane protein ORF59 (ORF59), found in Ictalurid herpesvirus 1 (strain Auburn) (IcHV-1).